The sequence spans 506 residues: Lysine--tRNA ligase (506 aa).

2 residues coordinate Mg(2+): Glu416 and Glu423.

The protein belongs to the class-II aminoacyl-tRNA synthetase family. In terms of assembly, homodimer. Mg(2+) serves as cofactor.

Its subcellular location is the cytoplasm. The catalysed reaction is tRNA(Lys) + L-lysine + ATP = L-lysyl-tRNA(Lys) + AMP + diphosphate. In Bordetella bronchiseptica (strain ATCC BAA-588 / NCTC 13252 / RB50) (Alcaligenes bronchisepticus), this protein is Lysine--tRNA ligase.